The following is a 258-amino-acid chain: ATP synthase subunit a (258 aa).

A run of 5 helical transmembrane segments spans residues 38 to 58 (KPVWFLWLGAAITFLFMYVGA), 94 to 114 (WFPYSLTLFIFLLVLNIIGLF), 118 to 138 (YPVTSNISFTATLALFTFVLT), 193 to 213 (ILAGHLIIFVFLSLILYFGLP), and 215 to 235 (AFVSVPFAVVFYAFEIFVAVI).

This sequence belongs to the ATPase A chain family. In terms of assembly, F-type ATPases have 2 components, CF(1) - the catalytic core - and CF(0) - the membrane proton channel. CF(1) has five subunits: alpha(3), beta(3), gamma(1), delta(1), epsilon(1). CF(0) has three main subunits: a(1), b(2) and c(9-12). The alpha and beta chains form an alternating ring which encloses part of the gamma chain. CF(1) is attached to CF(0) by a central stalk formed by the gamma and epsilon chains, while a peripheral stalk is formed by the delta and b chains.

The protein localises to the cell membrane. In terms of biological role, key component of the proton channel; it plays a direct role in the translocation of protons across the membrane. In Rubrobacter xylanophilus (strain DSM 9941 / JCM 11954 / NBRC 16129 / PRD-1), this protein is ATP synthase subunit a.